Consider the following 152-residue polypeptide: Methylglyoxal synthase (152 aa).

The 147-residue stretch at 6-152 (RTLATEKNIA…YEGYLKERLK (147 aa)) folds into the MGS-like domain. Residues H19, K23, 45–48 (TGTT), and 65–66 (SG) each bind substrate. The active-site Proton donor/acceptor is the D71. Residue H98 coordinates substrate.

It belongs to the methylglyoxal synthase family.

The catalysed reaction is dihydroxyacetone phosphate = methylglyoxal + phosphate. In terms of biological role, catalyzes the formation of methylglyoxal from dihydroxyacetone phosphate. The protein is Methylglyoxal synthase of Proteus mirabilis (strain HI4320).